We begin with the raw amino-acid sequence, 678 residues long: Penicillin-binding protein activator LpoA (678 aa).

The N-terminal stretch at 1-26 (MVPSTFSRLKAARCLPVVLAALIFAG) is a signal peptide. The N-palmitoyl cysteine moiety is linked to residue Cys-27. Cys-27 carries S-diacylglycerol cysteine lipidation. Disordered regions lie at residues 304-338 (AEQP…SVPV) and 495-530 (IALT…QFTN). A compositionally biased stretch (low complexity) spans 513 to 529 (TTNNPTLQTTPTDDQFT).

This sequence belongs to the LpoA family. In terms of assembly, interacts with PBP1a.

It localises to the cell outer membrane. Functionally, regulator of peptidoglycan synthesis that is essential for the function of penicillin-binding protein 1A (PBP1a). The polypeptide is Penicillin-binding protein activator LpoA (Escherichia coli O6:H1 (strain CFT073 / ATCC 700928 / UPEC)).